A 361-amino-acid polypeptide reads, in one-letter code: Putative F-box protein At3g18340 (361 aa).

The F-box domain maps to 1-46 (MASGKLPWELEEEILCRLPPGSLVRLRSVCKHWNDLYNDKWFIKKS).

This Arabidopsis thaliana (Mouse-ear cress) protein is Putative F-box protein At3g18340.